The following is a 679-amino-acid chain: Glycine--tRNA ligase beta subunit (679 aa).

The protein belongs to the class-II aminoacyl-tRNA synthetase family. Tetramer of two alpha and two beta subunits.

It localises to the cytoplasm. It carries out the reaction tRNA(Gly) + glycine + ATP = glycyl-tRNA(Gly) + AMP + diphosphate. The polypeptide is Glycine--tRNA ligase beta subunit (Streptococcus pyogenes serotype M18 (strain MGAS8232)).